The primary structure comprises 393 residues: NAD(P)H-quinone oxidoreductase subunit H, chloroplastic (393 aa).

This sequence belongs to the complex I 49 kDa subunit family. As to quaternary structure, NDH is composed of at least 16 different subunits, 5 of which are encoded in the nucleus.

It is found in the plastid. The protein localises to the chloroplast thylakoid membrane. The catalysed reaction is a plastoquinone + NADH + (n+1) H(+)(in) = a plastoquinol + NAD(+) + n H(+)(out). The enzyme catalyses a plastoquinone + NADPH + (n+1) H(+)(in) = a plastoquinol + NADP(+) + n H(+)(out). In terms of biological role, NDH shuttles electrons from NAD(P)H:plastoquinone, via FMN and iron-sulfur (Fe-S) centers, to quinones in the photosynthetic chain and possibly in a chloroplast respiratory chain. The immediate electron acceptor for the enzyme in this species is believed to be plastoquinone. Couples the redox reaction to proton translocation, and thus conserves the redox energy in a proton gradient. This is NAD(P)H-quinone oxidoreductase subunit H, chloroplastic from Crucihimalaya wallichii (Rock-cress).